We begin with the raw amino-acid sequence, 247 residues long: 1-(5-phosphoribosyl)-5-[(5-phosphoribosylamino)methylideneamino] imidazole-4-carboxamide isomerase (247 aa).

D8 (proton acceptor) is an active-site residue. The Proton donor role is filled by D129.

Belongs to the HisA/HisF family.

It is found in the cytoplasm. The catalysed reaction is 1-(5-phospho-beta-D-ribosyl)-5-[(5-phospho-beta-D-ribosylamino)methylideneamino]imidazole-4-carboxamide = 5-[(5-phospho-1-deoxy-D-ribulos-1-ylimino)methylamino]-1-(5-phospho-beta-D-ribosyl)imidazole-4-carboxamide. It participates in amino-acid biosynthesis; L-histidine biosynthesis; L-histidine from 5-phospho-alpha-D-ribose 1-diphosphate: step 4/9. In Rhodospirillum centenum (strain ATCC 51521 / SW), this protein is 1-(5-phosphoribosyl)-5-[(5-phosphoribosylamino)methylideneamino] imidazole-4-carboxamide isomerase.